The primary structure comprises 393 residues: MRSTTLLALLALVLLYLVSGALVFRALEQPHEQQAQRELGEVREKFLRAHPCVSDQELGLLIKEVADALGGGADPETNSTSNSSHSAWDLGSAFFFSGTIITTIGYGNVALRTDAGRLFCIFYALVGIPLFGILLAGVGDRLGSSLRHGIGHIEAIFLKWHVPPELVRVLSAMLFLLIGCLLFVLTPTFVFCYMEDWSKLEAIYFVIVTLTTVGFGDYVAGADPRQDSPAYQPLVWFWILLGLAYFASVLTTIGNWLRVVSRRTRAEMGGLTAQAASWTGTVTARVTQRAGPAAPPPEKEQPLLPPPPCPAQPLGRPRSPSPPEKAQPPSPPTASALDYPSENLAFIDESSDTQSERGCPLPRAPRGRRRPNPPRKPVRPRGPGRPRDKGVPV.

Residues 1-3 (MRS) lie on the Cytoplasmic side of the membrane. A helical transmembrane segment spans residues 4–24 (TTLLALLALVLLYLVSGALVF). Topologically, residues 25–87 (RALEQPHEQQ…NSTSNSSHSA (63 aa)) are extracellular. Residues asparagine 78 and asparagine 82 are each glycosylated (N-linked (GlcNAc...) asparagine). Positions 88-102 (WDLGSAFFFSGTIIT) form an intramembrane region, helical. Threonine 103, isoleucine 104, glycine 105, and tyrosine 106 together coordinate K(+). The segment at 103–108 (TIGYGN) is selectivity filter 1. The stretch at 103-109 (TIGYGNV) is an intramembrane region. The Extracellular portion of the chain corresponds to 110–117 (ALRTDAGR). A helical membrane pass occupies residues 118 to 150 (LFCIFYALVGIPLFGILLAGVGDRLGSSLRHGI). Over 151-172 (GHIEAIFLKWHVPPELVRVLSA) the chain is Cytoplasmic. A helical transmembrane segment spans residues 173–194 (MLFLLIGCLLFVLTPTFVFCYM). The Extracellular portion of the chain corresponds to 195-199 (EDWSK). Residues 200–213 (LEAIYFVIVTLTTV) constitute an intramembrane region (helical). K(+) is bound by residues threonine 212, valine 213, glycine 214, and phenylalanine 215. The tract at residues 212 to 217 (TVGFGD) is selectivity filter 2. Residues 214 to 219 (GFGDYV) lie within the membrane without spanning it. Over 220 to 233 (AGADPRQDSPAYQP) the chain is Extracellular. Residues 234–260 (LVWFWILLGLAYFASVLTTIGNWLRVV) traverse the membrane as a helical segment. At 261–393 (SRRTRAEMGG…GRPRDKGVPV (133 aa)) the chain is on the cytoplasmic side. The segment at 285–393 (RVTQRAGPAA…GRPRDKGVPV (109 aa)) is disordered. Pro residues predominate over residues 319–332 (SPSPPEKAQPPSPP). The span at 365–384 (PRGRRRPNPPRKPVRPRGPG) shows a compositional bias: basic residues.

This sequence belongs to the two pore domain potassium channel (TC 1.A.1.8) family. Homodimer; disulfide-linked. Forms heterodimers with other 2-pore domain K(+) channel subunits, such as KCNK2 and KCNK10. In terms of processing, N-glycosylated.

The protein resides in the cell membrane. The protein localises to the cell projection. It is found in the axon. The catalysed reaction is K(+)(in) = K(+)(out). It catalyses the reaction Rb(+)(in) = Rb(+)(out). It carries out the reaction Cs(+)(in) = Cs(+)(out). Activated by mechanical stretch and arachidonic acid. Its function is as follows. K(+) channel that conducts voltage-dependent outward rectifying currents upon membrane depolarization. Voltage sensing is coupled to K(+) electrochemical gradient in an 'ion flux gating' mode where outward but not inward ion flow opens the gate. Converts to voltage-independent 'leak' conductance mode upon stimulation by various stimuli including mechanical membrane stretch, basic pH, heat and lipids. Homo- and heterodimerizes to form functional channels with distinct regulatory and gating properties. At trigeminal A-beta afferent nerves, the heterodimer of KCNK2/TREK-1 and KCNK4/TRAAK is mostly coexpressed at nodes of Ranvier where it conducts voltage-independent mechanosensitive and thermosensitive currents, allowing rapid action potential repolarization, high speed and high frequence saltatory conduction on myelinated nerves to ensure prompt sensory responses. Permeable to other monovalent cations such as Rb(+) and Cs(+). The sequence is that of Potassium channel subfamily K member 4 from Homo sapiens (Human).